Consider the following 141-residue polypeptide: Protein nfe1 (141 aa).

To the N-terminal of nitrogenase iron protein (NifH). Has lost the ATP-binding site.

Its function is as follows. Responsible for the nodulation efficiency and competitive ability of strain GR4 on alfalfa roots. The sequence is that of Protein nfe1 (nfe1) from Rhizobium meliloti (Ensifer meliloti).